Reading from the N-terminus, the 561-residue chain is Lysine--tRNA ligase (561 aa).

Residues E409 and E416 each coordinate Mg(2+).

Belongs to the class-II aminoacyl-tRNA synthetase family. Homodimer. It depends on Mg(2+) as a cofactor.

It localises to the cytoplasm. It carries out the reaction tRNA(Lys) + L-lysine + ATP = L-lysyl-tRNA(Lys) + AMP + diphosphate. The sequence is that of Lysine--tRNA ligase from Nostoc sp. (strain PCC 7120 / SAG 25.82 / UTEX 2576).